A 251-amino-acid chain; its full sequence is Electron transfer flavoprotein subunit beta, mitochondrial (251 aa).

The protein belongs to the ETF beta-subunit/FixA family. Heterodimer of an alpha and a beta subunit. Requires FAD as cofactor. It depends on AMP as a cofactor.

Its subcellular location is the mitochondrion matrix. Functionally, the electron transfer flavoprotein serves as a specific electron acceptor for several dehydrogenases, including five acyl-CoA dehydrogenases, glutaryl-CoA and sarcosine dehydrogenase. It transfers the electrons to the main mitochondrial respiratory chain via ETF-ubiquinone oxidoreductase (ETF dehydrogenase). Involved in leucine catabolism and in phytol degradation. This is Electron transfer flavoprotein subunit beta, mitochondrial (ETFB) from Arabidopsis thaliana (Mouse-ear cress).